Here is a 505-residue protein sequence, read N- to C-terminus: Nostrin (505 aa).

The F-BAR domain occupies 1 to 260 (MRDPLTDCSY…AISKIDIEKD (260 aa)). Coiled coils occupy residues 101–128 (AHQV…LVIS), 160–222 (ITTE…RIQL), and 295–332 (KERQ…AYSS). Residue S114 is modified to Phosphoserine. One can recognise an REM-1 domain in the interval 292–372 (AMSKERQTSS…SYKLSSVLAE (81 aa)). Positions 437 to 496 (LGNGLCKALYPFQARQDDELDLEKGDIVTIHKKKDEGWWFGSLKGKKGHFPAAYVEELPL) constitute an SH3 domain. S478 carries the phosphoserine modification.

As to quaternary structure, homotrimer. Interacts with DAB2. Interacts with NOS3, DNM2, WASL and CAV1. Interacts (via SH3 domain) with DNM2; this interaction allows the recruitment of NOS3 to dynamin-positive structures. As to expression, present in pulmonary arterial endothelial cells (at protein level).

The protein localises to the cell membrane. It is found in the cytoplasmic vesicle. It localises to the cytoplasm. The protein resides in the cytoskeleton. Multivalent adapter protein which may decrease NOS3 activity by inducing its translocation away from the plasma membrane. The chain is Nostrin from Bos taurus (Bovine).